We begin with the raw amino-acid sequence, 1415 residues long: DNA-directed RNA polymerase subunit beta' (1415 aa).

Zn(2+)-binding residues include Cys70, Cys72, Cys85, and Cys88. 3 residues coordinate Mg(2+): Asp461, Asp463, and Asp465. Positions 820, 894, 901, and 904 each coordinate Zn(2+). The interval 1382-1415 (ERERAQAIADEEQSLFIEPPPVVQATTEGEGDNA) is disordered.

Belongs to the RNA polymerase beta' chain family. The RNAP catalytic core consists of 2 alpha, 1 beta, 1 beta' and 1 omega subunit. When a sigma factor is associated with the core the holoenzyme is formed, which can initiate transcription. Mg(2+) serves as cofactor. Requires Zn(2+) as cofactor.

It carries out the reaction RNA(n) + a ribonucleoside 5'-triphosphate = RNA(n+1) + diphosphate. Its function is as follows. DNA-dependent RNA polymerase catalyzes the transcription of DNA into RNA using the four ribonucleoside triphosphates as substrates. The chain is DNA-directed RNA polymerase subunit beta' from Cupriavidus pinatubonensis (strain JMP 134 / LMG 1197) (Cupriavidus necator (strain JMP 134)).